A 380-amino-acid chain; its full sequence is Succinyl-diaminopimelate desuccinylase (380 aa).

His70 is a binding site for Zn(2+). The active site involves Asp72. Position 103 (Asp103) interacts with Zn(2+). The active-site Proton acceptor is the Glu137. 3 residues coordinate Zn(2+): Glu138, Glu166, and His352.

This sequence belongs to the peptidase M20A family. DapE subfamily. Homodimer. It depends on Zn(2+) as a cofactor. Requires Co(2+) as cofactor.

The enzyme catalyses N-succinyl-(2S,6S)-2,6-diaminopimelate + H2O = (2S,6S)-2,6-diaminopimelate + succinate. Its pathway is amino-acid biosynthesis; L-lysine biosynthesis via DAP pathway; LL-2,6-diaminopimelate from (S)-tetrahydrodipicolinate (succinylase route): step 3/3. Catalyzes the hydrolysis of N-succinyl-L,L-diaminopimelic acid (SDAP), forming succinate and LL-2,6-diaminopimelate (DAP), an intermediate involved in the bacterial biosynthesis of lysine and meso-diaminopimelic acid, an essential component of bacterial cell walls. In Azoarcus sp. (strain BH72), this protein is Succinyl-diaminopimelate desuccinylase.